The sequence spans 411 residues: Serine/threonine transporter SstT (411 aa).

A run of 9 helical transmembrane segments spans residues 14 to 34 (GSLVIQIIVGIVAGILLASVA), 43 to 63 (FLGGLFVSALKAVAPILVFIL), 82 to 102 (IIMLYLFGTLMAALTAVVMSF), 141 to 161 (ALMSGNFIGILAWAIALGFAL), 192 to 212 (IGIFGLVANTFAETGFAALAG), 218 to 238 (AVLLGSMAVIALVVNPAIVFF), 290 to 310 (IPLGATINMAGAAITITVLTL), 330 to 350 (VVAAVSACGASGVAGGSLLLI), and 357 to 377 (FGIPNEVAMQVVAVGFIIGVI).

This sequence belongs to the dicarboxylate/amino acid:cation symporter (DAACS) (TC 2.A.23) family.

Its subcellular location is the cell inner membrane. It carries out the reaction L-serine(in) + Na(+)(in) = L-serine(out) + Na(+)(out). The enzyme catalyses L-threonine(in) + Na(+)(in) = L-threonine(out) + Na(+)(out). In terms of biological role, involved in the import of serine and threonine into the cell, with the concomitant import of sodium (symport system). The protein is Serine/threonine transporter SstT of Photobacterium profundum (strain SS9).